A 362-amino-acid polypeptide reads, in one-letter code: Aspartate carbamoyltransferase catalytic subunit (362 aa).

The tract at residues 1-22 is disordered; it reads MPKTAMTDSTSKTSTNTASSDM. Positions 7 to 20 are enriched in low complexity; sequence TDSTSKTSTNTASS. The carbamoyl phosphate site is built by arginine 100 and threonine 101. L-aspartate is bound at residue lysine 128. Residues arginine 150, histidine 180, and glutamine 183 each contribute to the carbamoyl phosphate site. Residues arginine 214 and arginine 269 each contribute to the L-aspartate site. Carbamoyl phosphate-binding residues include glycine 310 and proline 311.

The protein belongs to the aspartate/ornithine carbamoyltransferase superfamily. ATCase family. As to quaternary structure, heterododecamer (2C3:3R2) of six catalytic PyrB chains organized as two trimers (C3), and six regulatory PyrI chains organized as three dimers (R2).

The enzyme catalyses carbamoyl phosphate + L-aspartate = N-carbamoyl-L-aspartate + phosphate + H(+). The protein operates within pyrimidine metabolism; UMP biosynthesis via de novo pathway; (S)-dihydroorotate from bicarbonate: step 2/3. Catalyzes the condensation of carbamoyl phosphate and aspartate to form carbamoyl aspartate and inorganic phosphate, the committed step in the de novo pyrimidine nucleotide biosynthesis pathway. In Psychrobacter sp. (strain PRwf-1), this protein is Aspartate carbamoyltransferase catalytic subunit.